Reading from the N-terminus, the 295-residue chain is Glutamyl-Q tRNA(Asp) synthetase (295 aa).

Residues 5 to 9 (RFAPS) and Glu41 each bind L-glutamate. The short motif at 8 to 18 (PSPTGLLHIGS) is the 'HIGH' region element. Zn(2+) is bound by residues Cys97, Cys99, Tyr117, and Cys121. L-glutamate-binding residues include Tyr178 and Arg196. The 'KMSKS' region motif lies at 234 to 238 (KWSKQ). Lys237 is an ATP binding site.

It belongs to the class-I aminoacyl-tRNA synthetase family. GluQ subfamily. Requires Zn(2+) as cofactor.

In terms of biological role, catalyzes the tRNA-independent activation of glutamate in presence of ATP and the subsequent transfer of glutamate onto a tRNA(Asp). Glutamate is transferred on the 2-amino-5-(4,5-dihydroxy-2-cyclopenten-1-yl) moiety of the queuosine in the wobble position of the QUC anticodon. The polypeptide is Glutamyl-Q tRNA(Asp) synthetase (Neisseria meningitidis serogroup B (strain ATCC BAA-335 / MC58)).